A 156-amino-acid chain; its full sequence is Ribosomal RNA large subunit methyltransferase H (156 aa).

S-adenosyl-L-methionine contacts are provided by residues L73, G104, and 123-128 (LSALTL).

It belongs to the RNA methyltransferase RlmH family. In terms of assembly, homodimer.

The protein resides in the cytoplasm. The catalysed reaction is pseudouridine(1915) in 23S rRNA + S-adenosyl-L-methionine = N(3)-methylpseudouridine(1915) in 23S rRNA + S-adenosyl-L-homocysteine + H(+). In terms of biological role, specifically methylates the pseudouridine at position 1915 (m3Psi1915) in 23S rRNA. The polypeptide is Ribosomal RNA large subunit methyltransferase H (Vibrio vulnificus (strain CMCP6)).